Reading from the N-terminus, the 838-residue chain is DNA gyrase subunit A (838 aa).

Threonine 2 carries the post-translational modification N-acetylthreonine. One can recognise a Topo IIA-type catalytic domain in the interval 41 to 510 (LPEVRDGLKP…ADGDVSDEDL (470 aa)). Tyrosine 129 (O-(5'-phospho-DNA)-tyrosine intermediate) is an active-site residue. Residues aspartate 504, serine 506, glutamate 508, and aspartate 515 each coordinate Ca(2+). One can recognise an EF-hand domain in the interval 504 to 516 (DVSDEDLIAREDV). Residues 514-838 (EDVVVTITET…DANGADQTGN (325 aa)) are C-terminal domain CTD. The GyrA-box motif lies at 537–543 (QKRGGKG). The GyrA-box-1 motif lies at 743-749 (QGRGGKG).

The protein belongs to the type II topoisomerase GyrA/ParC subunit family. In terms of assembly, heterotetramer, composed of two GyrA and two GyrB chains. In the heterotetramer, GyrA contains the active site tyrosine that forms a transient covalent intermediate with DNA, while GyrB binds cofactors and catalyzes ATP hydrolysis. Requires Ca(2+) as cofactor.

Its subcellular location is the cytoplasm. The catalysed reaction is ATP-dependent breakage, passage and rejoining of double-stranded DNA.. DNA supercoiling inhibited by (fluoro)quinoline antibiotics such as sparfloxacin and levofloxacin, which usually act on GyrA. DNA supercoiling inhibited by the coumarin antibiotic novobiocin which acts on GyrB. Quinolones lead to gyrase-mediated dsDNA cleavage while preventing reclosure. DNA supercoiling activity inhibited by aminopyrazinamide and pyrrolamide derivatives, probably via effects on the GyrB subunit. DNA relaxation inhibited by ATP and its analogs. DNA supercoiling, relaxation, decatenation and quinolone-promoted DNA cleavage are inhibited by MfpA (50% inhibition occurs at 2 uM), inhibition of gyrase activities is enhanced in a concentration-dependent manner by MfpA. In terms of biological role, a type II topoisomerase that negatively supercoils closed circular double-stranded (ds) DNA in an ATP-dependent manner to maintain chromosomes in an underwound state, while in the absence of ATP it relaxes supercoiled dsDNA. Also catalyzes the interconversion of other topological isomers of dsDNA rings, including catenanes. Gyrase from M.tuberculosis has higher decatenation than supercoiling activity compared to E.coli; as M.tuberculosis only has 1 type II topoisomerase, gyrase has to fulfill the decatenation function of topoisomerase IV as well. At comparable concentrations M.tuberculosis gyrase cannot introduce as many negative supercoils into DNA as the E.coli enzyme, and its ATPase activity is lower, perhaps because it does not couple DNA wrapping and ATP binding as well as E.coli. Negative supercoiling favors strand separation, and DNA replication, transcription, recombination and repair, all of which involve strand separation. Type II topoisomerases break and join 2 DNA strands simultaneously in an ATP-dependent manner. The sequence is that of DNA gyrase subunit A from Mycobacterium tuberculosis (strain ATCC 25618 / H37Rv).